Consider the following 139-residue polypeptide: uncharacterized protein (139 aa).

The interval 83–109 (LIPPKKTSPATSSSLKPPRRPRGCLNG) is disordered. Low complexity predominate over residues 86 to 98 (PKKTSPATSSSLK).

This sequence to M.pneumoniae MPN_091 and MPN_463.

This is an uncharacterized protein from Mycoplasma pneumoniae (strain ATCC 29342 / M129 / Subtype 1) (Mycoplasmoides pneumoniae).